The chain runs to 159 residues: Phosphopantetheine adenylyltransferase (159 aa).

Ser-9 contacts substrate. Residues 9 to 10 (SF) and His-17 contribute to the ATP site. The substrate site is built by Lys-41, Leu-74, and Lys-88. Residues 89-91 (GLR), Glu-99, and 123-129 (YLHLSST) contribute to the ATP site.

Belongs to the bacterial CoaD family. In terms of assembly, homohexamer. Mg(2+) serves as cofactor.

It is found in the cytoplasm. It catalyses the reaction (R)-4'-phosphopantetheine + ATP + H(+) = 3'-dephospho-CoA + diphosphate. It participates in cofactor biosynthesis; coenzyme A biosynthesis; CoA from (R)-pantothenate: step 4/5. In terms of biological role, reversibly transfers an adenylyl group from ATP to 4'-phosphopantetheine, yielding dephospho-CoA (dPCoA) and pyrophosphate. The polypeptide is Phosphopantetheine adenylyltransferase (Arthrobacter sp. (strain FB24)).